The sequence spans 378 residues: MSHLDNGFRSLTLQRFPATDDVNPLQAWEAADEYLLQQLDDTEIRGPVLILNDAFGALSCALAEHKPYSIGDSYISELATRENLRLNGIDESSVKFLDSTADYPQQPGVVLIKVPKTLALLEQQLRALRKVVTSDTRIIAGAKARDIHTSTLELFEKVLGPTTTTLAWKKARLINCTFNEPPLADAPQTVSWKLEGTDWTIHNHANVFSRTGLDIGARFFMQHLPENLEGEIVDLGCGNGVIGLTLLDKNPQAKVVFVDESPMAVASSRLNVETNMPEALDRCEFMINNALSGVEPFRFNAVLCNPPFHQQHALTDNVAWEMFHHARRCLKINGELYIVANRHLDYFHKLKKIFGNCTTIATNNKFVVLKAVKLGRRR.

This sequence belongs to the methyltransferase superfamily. RlmG family.

The protein resides in the cytoplasm. It catalyses the reaction guanosine(1835) in 23S rRNA + S-adenosyl-L-methionine = N(2)-methylguanosine(1835) in 23S rRNA + S-adenosyl-L-homocysteine + H(+). In terms of biological role, specifically methylates the guanine in position 1835 (m2G1835) of 23S rRNA. The protein is Ribosomal RNA large subunit methyltransferase G of Shigella dysenteriae serotype 1 (strain Sd197).